The chain runs to 215 residues: Cytochrome b6 (215 aa).

The helical transmembrane segment at 32 to 52 threads the bilayer; that stretch reads IFYCLGGITLTCFLVQVATGF. Cysteine 35 is a binding site for heme c. Heme b-binding residues include histidine 86 and histidine 100. Transmembrane regions (helical) follow at residues 90 to 110, 116 to 136, and 186 to 206; these read ASMM…TGGF, LTWV…VTGY, and LHTF…FLMI. Heme b contacts are provided by histidine 187 and histidine 202.

Belongs to the cytochrome b family. PetB subfamily. As to quaternary structure, the 4 large subunits of the cytochrome b6-f complex are cytochrome b6, subunit IV (17 kDa polypeptide, PetD), cytochrome f and the Rieske protein, while the 4 small subunits are PetG, PetL, PetM and PetN. The complex functions as a dimer. It depends on heme b as a cofactor. Heme c is required as a cofactor.

It localises to the plastid. It is found in the chloroplast thylakoid membrane. In terms of biological role, component of the cytochrome b6-f complex, which mediates electron transfer between photosystem II (PSII) and photosystem I (PSI), cyclic electron flow around PSI, and state transitions. The sequence is that of Cytochrome b6 from Nicotiana tabacum (Common tobacco).